Here is a 362-residue protein sequence, read N- to C-terminus: Methylthioribose-1-phosphate isomerase (362 aa).

Residues 49–51 (RGA), R89, and Q201 contribute to the substrate site. The active-site Proton donor is D242. Position 252–253 (252–253 (NK)) interacts with substrate.

The protein belongs to the eIF-2B alpha/beta/delta subunits family. MtnA subfamily.

It carries out the reaction 5-(methylsulfanyl)-alpha-D-ribose 1-phosphate = 5-(methylsulfanyl)-D-ribulose 1-phosphate. It functions in the pathway amino-acid biosynthesis; L-methionine biosynthesis via salvage pathway; L-methionine from S-methyl-5-thio-alpha-D-ribose 1-phosphate: step 1/6. Functionally, catalyzes the interconversion of methylthioribose-1-phosphate (MTR-1-P) into methylthioribulose-1-phosphate (MTRu-1-P). The chain is Methylthioribose-1-phosphate isomerase from Leptospira borgpetersenii serovar Hardjo-bovis (strain JB197).